Here is a 160-residue protein sequence, read N- to C-terminus: Sec-independent protein translocase protein TatB (160 aa).

Residues M1–G21 traverse the membrane as a helical segment. Disordered regions lie at residues A70–T100 and R133–F160. Over residues S89–T100 the composition is skewed to polar residues.

The protein belongs to the TatB family. In terms of assembly, the Tat system comprises two distinct complexes: a TatABC complex, containing multiple copies of TatA, TatB and TatC subunits, and a separate TatA complex, containing only TatA subunits. Substrates initially bind to the TatABC complex, which probably triggers association of the separate TatA complex to form the active translocon.

The protein resides in the cell inner membrane. In terms of biological role, part of the twin-arginine translocation (Tat) system that transports large folded proteins containing a characteristic twin-arginine motif in their signal peptide across membranes. Together with TatC, TatB is part of a receptor directly interacting with Tat signal peptides. TatB may form an oligomeric binding site that transiently accommodates folded Tat precursor proteins before their translocation. This Polaromonas sp. (strain JS666 / ATCC BAA-500) protein is Sec-independent protein translocase protein TatB.